A 220-amino-acid polypeptide reads, in one-letter code: StAR-related lipid transfer protein 6 (220 aa).

Residues 1–208 (MDFKAIAQQT…AKDGIKAHRT (208 aa)) enclose the START domain.

Its function is as follows. May be involved in the intracellular transport of sterols or other lipids. May bind cholesterol or other sterols. This Homo sapiens (Human) protein is StAR-related lipid transfer protein 6 (STARD6).